Here is a 264-residue protein sequence, read N- to C-terminus: 5'-nucleotidase SurE (264 aa).

Aspartate 12, aspartate 13, serine 43, and asparagine 98 together coordinate a divalent metal cation.

It belongs to the SurE nucleotidase family. A divalent metal cation serves as cofactor.

The protein localises to the cytoplasm. It catalyses the reaction a ribonucleoside 5'-phosphate + H2O = a ribonucleoside + phosphate. Functionally, nucleotidase that shows phosphatase activity on nucleoside 5'-monophosphates. This chain is 5'-nucleotidase SurE, found in Sulfurovum sp. (strain NBC37-1).